Here is a 200-residue protein sequence, read N- to C-terminus: General odorant-binding protein 70 (200 aa).

The N-terminal stretch at 1 to 29 (MRRQYSMWASTVAVIACGSALMLLHPVGA) is a signal peptide. 2 disulfide bridges follow: Cys105–Cys174 and Cys152–Cys183.

The protein belongs to the PBP/GOBP family.

It is found in the secreted. Present in the aqueous fluid surrounding olfactory sensory dendrites and are thought to aid in the capture and transport of hydrophobic odorants into and through this fluid. The sequence is that of General odorant-binding protein 70 (Obp70) from Anopheles gambiae (African malaria mosquito).